Reading from the N-terminus, the 356-residue chain is Peptide chain release factor 1 (356 aa).

Glutamine 232 carries the post-translational modification N5-methylglutamine.

Belongs to the prokaryotic/mitochondrial release factor family. Methylated by PrmC. Methylation increases the termination efficiency of RF1.

It is found in the cytoplasm. In terms of biological role, peptide chain release factor 1 directs the termination of translation in response to the peptide chain termination codons UAG and UAA. This is Peptide chain release factor 1 from Thermoanaerobacter pseudethanolicus (strain ATCC 33223 / 39E) (Clostridium thermohydrosulfuricum).